Consider the following 704-residue polypeptide: Elongation factor G (704 aa).

The region spanning 10–290 (TKVRNIGIMA…AVVDYLPSPL (281 aa)) is the tr-type G domain. GTP contacts are provided by residues 19-26 (AHIDAGKT), 83-87 (DTPGH), and 137-140 (NKMD).

Belongs to the TRAFAC class translation factor GTPase superfamily. Classic translation factor GTPase family. EF-G/EF-2 subfamily.

It localises to the cytoplasm. Its function is as follows. Catalyzes the GTP-dependent ribosomal translocation step during translation elongation. During this step, the ribosome changes from the pre-translocational (PRE) to the post-translocational (POST) state as the newly formed A-site-bound peptidyl-tRNA and P-site-bound deacylated tRNA move to the P and E sites, respectively. Catalyzes the coordinated movement of the two tRNA molecules, the mRNA and conformational changes in the ribosome. In Beutenbergia cavernae (strain ATCC BAA-8 / DSM 12333 / CCUG 43141 / JCM 11478 / NBRC 16432 / NCIMB 13614 / HKI 0122), this protein is Elongation factor G.